A 180-amino-acid chain; its full sequence is Large ribosomal subunit protein uL6 (180 aa).

This sequence belongs to the universal ribosomal protein uL6 family. In terms of assembly, part of the 50S ribosomal subunit.

This protein binds to the 23S rRNA, and is important in its secondary structure. It is located near the subunit interface in the base of the L7/L12 stalk, and near the tRNA binding site of the peptidyltransferase center. This Anaeromyxobacter sp. (strain Fw109-5) protein is Large ribosomal subunit protein uL6.